The chain runs to 539 residues: Cell division control protein 6 homolog (539 aa).

The disordered stretch occupies residues 1 to 40; it reads MPAIAGPSSSPQKHVVGSRSESIGGVRSAEVNTSRKRKLI. Positions 35–38 match the Nuclear localization signal motif; that stretch reads RKRK.

This sequence belongs to the CDC6/cdc18 family. Highly expressed in roots, flower buds and etiolated seedlings. Expressed in leaves and stems. Highly expressed in proliferating cells such as root meristems, leaf primordia and young growing leaves, as well as cells undergoing endoreduplication cycles.

The protein localises to the nucleus. In terms of biological role, may be involved in the initiation of DNA replication. May play a role in endoreduplication. Could act as one of the factors that contributes to maintain endoreduplication competence. The sequence is that of Cell division control protein 6 homolog from Arabidopsis thaliana (Mouse-ear cress).